The chain runs to 133 residues: UPF0047 protein Rv2556c (133 aa).

The protein belongs to the UPF0047 family.

This Mycobacterium tuberculosis (strain ATCC 25618 / H37Rv) protein is UPF0047 protein Rv2556c.